The primary structure comprises 200 residues: Imidazoleglycerol-phosphate dehydratase (200 aa).

The protein belongs to the imidazoleglycerol-phosphate dehydratase family.

Its subcellular location is the cytoplasm. The enzyme catalyses D-erythro-1-(imidazol-4-yl)glycerol 3-phosphate = 3-(imidazol-4-yl)-2-oxopropyl phosphate + H2O. It functions in the pathway amino-acid biosynthesis; L-histidine biosynthesis; L-histidine from 5-phospho-alpha-D-ribose 1-diphosphate: step 6/9. This is Imidazoleglycerol-phosphate dehydratase from Bifidobacterium animalis subsp. lactis (strain AD011).